A 384-amino-acid chain; its full sequence is DNA dC-&gt;dU-editing enzyme APOBEC-3G (384 aa).

Residues 1–60 (MKPHFRNPVERMYQDTFSDNFYNRPILSRRNTVWLCYEVKTKGPSRPPLDAKIFRGQVYS) are essential for cytoplasmic localization. CMP/dCMP-type deaminase domains lie at 29 to 138 (RRNT…LRSL) and 214 to 328 (GRHE…LRTL). Residue Thr32 is modified to Phosphothreonine; by PKA. Residues His65, Cys97, and Cys100 each contribute to the Zn(2+) site. The tract at residues 209-336 (ELWVRGRHET…TLAKAGAEIS (128 aa)) is necessary for homooligomerization. Residues 213 to 215 (RGR) form an interaction with DNA region. Thr218 is modified (phosphothreonine; by PKA and CAMK2). His257 is a Zn(2+) binding site. Glu259 functions as the Proton donor in the catalytic mechanism. Cys288 and Cys291 together coordinate Zn(2+). Residues 313–320 (RIYDDQGR) form an interaction with DNA region.

The protein belongs to the cytidine and deoxycytidylate deaminase family. Homodimer. Homooligomer. Can bind RNA to form ribonucleoprotein complexes of high-molecular-mass (HMM) or low-molecular-mass (LMM). HMM is inactive and heterogeneous in protein composition because of binding nonselectively to cellular RNAs, which in turn are associated with variety of cellular proteins. The LMM form which is enzymatically active has few or no RNAs associated. Its ability to form homooligomer is distinct from its ability to assemble into HMM. Interacts with APOBEC3B, APOBEC3F, MOV10, AGO2, EIF4E, EIF4ENIF1, DCP2 and DDX6 in an RNA-dependent manner. Interacts with AGO1, AGO3 and PKA/PRKACA. The cofactor is Zn(2+).

The protein resides in the cytoplasm. Its subcellular location is the nucleus. It localises to the P-body. It catalyses the reaction a 2'-deoxycytidine in single-stranded DNA + H2O + H(+) = a 2'-deoxyuridine in single-stranded DNA + NH4(+). Functionally, DNA deaminase (cytidine deaminase) which acts as an inhibitor of retrovirus replication and retrotransposon mobility via deaminase-dependent and -independent mechanisms. After the penetration of retroviral nucleocapsids into target cells of infection and the initiation of reverse transcription, it can induce the conversion of cytosine to uracil in the minus-sense single-strand viral DNA, leading to G-to-A hypermutations in the subsequent plus-strand viral DNA. The resultant detrimental levels of mutations in the proviral genome, along with a deamination-independent mechanism that works prior to the proviral integration, together exert efficient antiretroviral effects in infected target cells. Selectively targets single-stranded DNA and does not deaminate double-stranded DNA or single- or double-stranded RNA. May inhibit the mobility of LTR retrotransposons. The protein is DNA dC-&gt;dU-editing enzyme APOBEC-3G (APOBEC3G) of Pan paniscus (Pygmy chimpanzee).